Consider the following 129-residue polypeptide: Large ribosomal subunit protein uL22 (129 aa).

It belongs to the universal ribosomal protein uL22 family. As to quaternary structure, part of the 50S ribosomal subunit.

In terms of biological role, this protein binds specifically to 23S rRNA; its binding is stimulated by other ribosomal proteins, e.g. L4, L17, and L20. It is important during the early stages of 50S assembly. It makes multiple contacts with different domains of the 23S rRNA in the assembled 50S subunit and ribosome. Its function is as follows. The globular domain of the protein is located near the polypeptide exit tunnel on the outside of the subunit, while an extended beta-hairpin is found that lines the wall of the exit tunnel in the center of the 70S ribosome. This chain is Large ribosomal subunit protein uL22, found in Sinorhizobium medicae (strain WSM419) (Ensifer medicae).